The primary structure comprises 152 residues: MIYYLIALFVIAIDQLSKWFIVKNMELGASIPIIDNVLYITSHRNRGAAWGILENKMWFFYIITVVFVGFIVFYMKKYAKTDKLLGISLGLILGGAIGNFIDRVFRQEVVDFIHVYIFSYNYPVFNIADSALCIGVVLIIIQTLLEGKKMKE.

Helical transmembrane passes span 55–75 (NKMW…VFYM) and 85–105 (LGIS…DRVF). Residues Asp-111 and Asp-129 contribute to the active site. A helical transmembrane segment spans residues 124–144 (VFNIADSALCIGVVLIIIQTL).

Belongs to the peptidase A8 family.

The protein resides in the cell membrane. The enzyme catalyses Release of signal peptides from bacterial membrane prolipoproteins. Hydrolyzes -Xaa-Yaa-Zaa-|-(S,diacylglyceryl)Cys-, in which Xaa is hydrophobic (preferably Leu), and Yaa (Ala or Ser) and Zaa (Gly or Ala) have small, neutral side chains.. Its pathway is protein modification; lipoprotein biosynthesis (signal peptide cleavage). This protein specifically catalyzes the removal of signal peptides from prolipoproteins. This Bacillus cytotoxicus (strain DSM 22905 / CIP 110041 / 391-98 / NVH 391-98) protein is Lipoprotein signal peptidase.